Consider the following 567-residue polypeptide: 2-isopropylmalate synthase (567 aa).

The Pyruvate carboxyltransferase domain occupies 28 to 302; the sequence is PQWCSVDLRD…NPELDFSDIN (275 aa). 4 residues coordinate Mg(2+): Asp37, His241, His243, and Asn277. A regulatory domain region spans residues 435–567; that stretch reads IRTPLQLNYH…DMDTQEEDIA (133 aa).

Belongs to the alpha-IPM synthase/homocitrate synthase family. LeuA type 2 subfamily. In terms of assembly, homodimer. Mg(2+) is required as a cofactor.

Its subcellular location is the cytoplasm. The enzyme catalyses 3-methyl-2-oxobutanoate + acetyl-CoA + H2O = (2S)-2-isopropylmalate + CoA + H(+). The protein operates within amino-acid biosynthesis; L-leucine biosynthesis; L-leucine from 3-methyl-2-oxobutanoate: step 1/4. Catalyzes the condensation of the acetyl group of acetyl-CoA with 3-methyl-2-oxobutanoate (2-ketoisovalerate) to form 3-carboxy-3-hydroxy-4-methylpentanoate (2-isopropylmalate). The polypeptide is 2-isopropylmalate synthase (Acetoanaerobium sticklandii (strain ATCC 12662 / DSM 519 / JCM 1433 / CCUG 9281 / NCIMB 10654 / HF) (Clostridium sticklandii)).